The chain runs to 151 residues: Small ribosomal subunit protein uS15 (151 aa).

It belongs to the universal ribosomal protein uS15 family.

The sequence is that of Small ribosomal subunit protein uS15 (RPS13) from Zea mays (Maize).